A 143-amino-acid polypeptide reads, in one-letter code: Large ribosomal subunit protein uL15 (143 aa).

A disordered region spans residues 1-52 (MELNTIQPADGAKHYKRRVGRGIGSGLGKTAGRGHKGQKSRSGGFHKVGFEG). Positions 21–31 (RGIGSGLGKTA) are enriched in gly residues.

The protein belongs to the universal ribosomal protein uL15 family. As to quaternary structure, part of the 50S ribosomal subunit.

Binds to the 23S rRNA. This is Large ribosomal subunit protein uL15 from Herminiimonas arsenicoxydans.